We begin with the raw amino-acid sequence, 228 residues long: Fibrillarin-like rRNA/tRNA 2'-O-methyltransferase (228 aa).

S-adenosyl-L-methionine is bound by residues 85–86 (TT), 103–104 (EF), 128–129 (DA), and 148–151 (DVAQ).

It belongs to the methyltransferase superfamily. Fibrillarin family. As to quaternary structure, interacts with nop5. Component of box C/D small ribonucleoprotein (sRNP) particles that contain rpl7ae, FlpA and nop5, plus a guide RNA.

Functionally, involved in pre-rRNA and tRNA processing. Utilizes the methyl donor S-adenosyl-L-methionine to catalyze the site-specific 2'-hydroxyl methylation of ribose moieties in rRNA and tRNA. Site specificity is provided by a guide RNA that base pairs with the substrate. Methylation occurs at a characteristic distance from the sequence involved in base pairing with the guide RNA. This is Fibrillarin-like rRNA/tRNA 2'-O-methyltransferase from Methanococcus voltae.